A 1667-amino-acid chain; its full sequence is Myomesin-1 (1667 aa).

A phosphoserine mark is found at Ser124 and Ser142. A compositionally biased stretch (low complexity) spans 192–210; the sequence is SKQSTASKQSATSKRTTST. The segment at 192-217 is disordered; that stretch reads SKQSTASKQSATSKRTTSTLQREETF. 2 consecutive Ig-like C2-type domains span residues 258 to 349 and 376 to 478; these read PEFI…ASVV and PYGY…AYVF. Fibronectin type-III domains lie at 492–587, 620–714, and 721–814; these read APLD…ALDP, PPTD…VVGD, and APGK…VKAA. Positions 818–915 are disordered; that stretch reads GVSPDVWPQL…PKKKKDPVAV (98 aa). 2 positions are modified to phosphoserine: Ser863 and Ser867. Residues 885 to 894 are compositionally biased toward low complexity; it reads EPLSSPPQEA. Fibronectin type-III domains follow at residues 918-1016 and 1023-1122; these read APYD…CEEW and PPHS…TRPG. A Phosphoserine modification is found at Ser1036. Ig-like C2-type domains lie at 1114 to 1212, 1340 to 1426, and 1555 to 1644; these read PVVA…EEMK, PHFA…LKLV, and RVLG…FTVS.

In terms of assembly, homodimer. Interacts with TTN/titin and PNKD. In terms of tissue distribution, ubiquitously expressed in all striated muscles. Expressed in all fiber types.

Its subcellular location is the cytoplasm. The protein localises to the myofibril. It is found in the sarcomere. It localises to the m line. May link the intermediate filament cytoskeleton to the M-disk of the myofibrils in striated muscle. May also contact myosin filaments. Also binds beta-integrins. The sequence is that of Myomesin-1 (Myom1) from Mus musculus (Mouse).